The chain runs to 763 residues: MDTLFVEEVAASLIREFLSRKGLKKTYVTMDQERPRSDLSINSRNDLRKVLHLEFLYKENKAKENPLKTNLELITRYFLDHFGNIGNNVTQETRIPELSVPKKSNKLPLRSSETTLVNIYHLADEDETWRTSLSEISKARHDSLDGDVLGHFVSSKRSSHKSRPIKTVAGESPTVASAWEKTDKLPMSEPSLDTKRMGEKVRPKSGLIVRGMMAGPIASSPQDSLRKRSLRRSPALSSATQPHKEGSPQEPELSTHTSTCPTPLEGPASSTASTSRSPQGPLSELTWEKQRTSPGSPPHLPGKGLLPRGSGRWRDLSEDSPAVDSGSEAIRTPPKFSLSSGNVPKTQERPERAFERQGSQPASLRKNQLSVSNKLEGDLDVLQLEDVEDELVREEIILSPVSSVLKLQVVSKPIDLSVAKDIKTILFGSSFCCFSDEWKLQSFSFNDSVSLKYGIVQNKGGPCGVLAAVQGCVLQKLLFEGDSSADCARLQPSNARRTHCLALAIADIVWRAGGCERAVVTLASGTQHFSPTGKYKADGVLETLILHSLTCYEELVTFLQQSIHQFEAGPYGCVLLTLSAILSRSTELVRQDFDVPTSHLIGAHGYCTQELVNLLLTGKAVSNVFNDVVELDSGNGDVTLLKGISTRSDIGFLSLFEHYNVCQVGCFLKTPRFPIWVVCSESHFSVLFSQQLELLRDWRAERLFDLYYYDGLANQQEQIRLTVDTTQTVPEDRDNGLVPPLELCNRTKWKGASVNWNGSEPIL.

Position 143 is a phosphoserine (serine 143). Positions serine 154–glutamine 368 are disordered. Positions glutamate 180–arginine 202 are enriched in basic and acidic residues. A phosphoserine mark is found at serine 220 and serine 224. The span at glutamate 252–proline 261 shows a compositional bias: polar residues. The span at proline 267–proline 278 shows a compositional bias: low complexity. Serine 296 is modified (phosphoserine). A compositionally biased stretch (basic and acidic residues) spans threonine 346–glutamate 355. Residues glutamine 357 to glutamine 368 show a composition bias toward polar residues. Residue cysteine 463 is the Nucleophile of the active site. Histidine 683 serves as the catalytic Proton acceptor.

Belongs to the MINDY deubiquitinase family. FAM188 subfamily.

The catalysed reaction is Thiol-dependent hydrolysis of ester, thioester, amide, peptide and isopeptide bonds formed by the C-terminal Gly of ubiquitin (a 76-residue protein attached to proteins as an intracellular targeting signal).. Functionally, probable hydrolase that can remove 'Lys-48'-linked conjugated ubiquitin from proteins. The chain is Probable ubiquitin carboxyl-terminal hydrolase MINDY-4 (MINDY4) from Bos taurus (Bovine).